A 494-amino-acid chain; its full sequence is GTPase Der (494 aa).

EngA-type G domains follow at residues 2–164 and 235–407; these read KKIA…PEED and IKIS…KNYS. Residues 8 to 15, 55 to 59, 116 to 119, 241 to 248, 288 to 292, and 352 to 355 contribute to the GTP site; these read GRPNVGKS, DTGGL, NKID, GRTNVGKS, DTAGL, and NKWD. The KH-like domain occupies 408–492; sequence QHIKTSELNV…PVLFKAKKRG (85 aa).

The protein belongs to the TRAFAC class TrmE-Era-EngA-EngB-Septin-like GTPase superfamily. EngA (Der) GTPase family. As to quaternary structure, associates with the 50S ribosomal subunit.

Functionally, GTPase that plays an essential role in the late steps of ribosome biogenesis. The protein is GTPase Der of Sulfurimonas denitrificans (strain ATCC 33889 / DSM 1251) (Thiomicrospira denitrificans (strain ATCC 33889 / DSM 1251)).